Consider the following 179-residue polypeptide: MARLKEFYRDTVMKQLMEKFQYSNVMEVPRITKITLNMGLGEAVGDKKIIEHAVSDMTAIAGQKPVVTKARKSIAGFKIRDDYPIGCMVTLRREAMYEFLDRLVNVALPRVRDFRGLNPKGFDGRGNYNMGIKEQIIFPEVDYDKIDALRGMNISITTTAKNDEEARALLSAFSFPFKH.

This sequence belongs to the universal ribosomal protein uL5 family. In terms of assembly, part of the 50S ribosomal subunit; part of the 5S rRNA/L5/L18/L25 subcomplex. Contacts the 5S rRNA and the P site tRNA. Forms a bridge to the 30S subunit in the 70S ribosome.

Its function is as follows. This is one of the proteins that bind and probably mediate the attachment of the 5S RNA into the large ribosomal subunit, where it forms part of the central protuberance. In the 70S ribosome it contacts protein S13 of the 30S subunit (bridge B1b), connecting the 2 subunits; this bridge is implicated in subunit movement. Contacts the P site tRNA; the 5S rRNA and some of its associated proteins might help stabilize positioning of ribosome-bound tRNAs. In Thioalkalivibrio sulfidiphilus (strain HL-EbGR7), this protein is Large ribosomal subunit protein uL5.